The chain runs to 99 residues: RNA-binding protein Hfq (99 aa).

The 60-residue stretch at 9-68 (DPFLNALRRERVPVSIYLVNGIKLQGQIESFDQFVILLKNTVSQMVYKHAISTVVPSRPV) folds into the Sm domain. The interval 64-99 (PSRPVSHHSNNPGGGSNYHGNNTAASQQSQEADDAE) is disordered.

It belongs to the Hfq family. As to quaternary structure, homohexamer.

Functionally, RNA chaperone that binds small regulatory RNA (sRNAs) and mRNAs to facilitate mRNA translational regulation in response to envelope stress, environmental stress and changes in metabolite concentrations. Also binds with high specificity to tRNAs. The chain is RNA-binding protein Hfq from Pectobacterium carotovorum subsp. carotovorum (strain PC1).